The primary structure comprises 329 residues: Flotillin-like protein FloA (329 aa).

A run of 2 helical transmembrane segments spans residues 4–24 (IAFI…FAIV) and 26–46 (VGLW…TLIG).

The protein belongs to the flotillin-like FloA family. Homooligomerizes.

Its subcellular location is the cell membrane. The protein localises to the membrane raft. Functionally, found in functional membrane microdomains (FMM) that may be equivalent to eukaryotic membrane rafts. FMMs are highly dynamic and increase in number as cells age. Flotillins are thought to be important factors in membrane fluidity. In Acetivibrio thermocellus (strain ATCC 27405 / DSM 1237 / JCM 9322 / NBRC 103400 / NCIMB 10682 / NRRL B-4536 / VPI 7372) (Clostridium thermocellum), this protein is Flotillin-like protein FloA.